The following is a 1308-amino-acid chain: Contactin-associated protein-like 4 (1308 aa).

The N-terminal stretch at 1–25 is a signal peptide; sequence MGSVTGAVLKTLLLLSTQNWNRVEA. Residues 26–1241 lie on the Extracellular side of the membrane; sequence GNSYDCDDPL…LANAIKSDSA (1216 aa). The F5/8 type C domain maps to 31 to 177; the sequence is CDDPLVSALP…IGMRIEVFGC (147 aa). An intrachain disulfide couples Cys31 to Cys177. 2 Laminin G-like domains span residues 212 to 364 and 398 to 547; these read FKTM…SFSC and FRTW…IDSC. N-linked (GlcNAc...) asparagine glycosylation is found at Asn260, Asn285, Asn359, and Asn538. Intrachain disulfides connect Cys332–Cys364, Cys515–Cys547, Cys553–Cys564, and Cys558–Cys573. One can recognise an EGF-like 1 domain in the interval 549-586; the sequence is ISDRCLPNYCEHGGECSQSWSTFHCNCTNTGYRGATCH. N-linked (GlcNAc...) asparagine glycosylation is present at Asn574. The cysteines at positions 575 and 585 are disulfide-linked. In terms of domain architecture, Fibrinogen C-terminal spans 587 to 792; sequence NSIYEQSCEA…LLCQGDRSFW (206 aa). N-linked (GlcNAc...) asparagine glycosylation is found at Asn602, Asn625, Asn637, Asn706, and Asn748. The region spanning 793 to 957 is the Laminin G-like 3 domain; it reads NSASFDTEAS…AQVTPEVQPG (165 aa). 4 disulfide bridges follow: Cys931–Cys958, Cys962–Cys975, Cys969–Cys984, and Cys986–Cys996. Residues 958 to 997 form the EGF-like 2 domain; sequence CRGHCSSYGKLCRNGGKCRERPIGFFCDCTFSAYTGPFCS. N-linked (GlcNAc...) asparagine glycans are attached at residues Asn1023 and Asn1073. Residues 1046–1202 enclose the Laminin G-like 4 domain; it reads FRTTRTPSLL…VTGHVTESSC (157 aa). Residues Cys1167 and Cys1202 are joined by a disulfide bond. A helical transmembrane segment spans residues 1242-1262; it reads VIGGLIAVVIFILLCITAIAV. Topologically, residues 1263–1308 are cytoplasmic; sequence RIYQQKRLYKRSEAKRSENVDSAEAVLKSELNIQNAVNENQKEYFF.

It belongs to the neurexin family. In terms of assembly, interacts with TIAM1.

The protein localises to the presynaptic cell membrane. Its function is as follows. Presynaptic protein involved in both dopaminergic synaptic transmission and GABAergic system, thereby participating in the structural maturation of inhibitory interneuron synapses. Involved in the dopaminergic synaptic transmission by attenuating dopamine release through a presynaptic mechanism. Also participates in the GABAergic system. The protein is Contactin-associated protein-like 4 (CNTNAP4) of Homo sapiens (Human).